A 179-amino-acid polypeptide reads, in one-letter code: MAFCAPPAYLTHQQKVLRLYKRALRHLESWCIHRDKYRYFACLMRARFEEHKNEKDMMRATQLLREAEEEFWQNQHPQPYIFPDSPGGTSFERYECYKVPEWCLDYWHPSEKAMYPDYFSKREQWKKLRMESWDREVKQLQEETSPDGIMTEALPPARREGDLPPLWWHIVTRPRERPT.

Ala-2 is modified (N-acetylalanine). Phosphoserine is present on Ser-85.

It belongs to the complex I LYR family. Mammalian complex I is composed of 45 different subunits.

The protein localises to the mitochondrion inner membrane. Functionally, accessory subunit of the mitochondrial membrane respiratory chain NADH dehydrogenase (Complex I), that is believed to be not involved in catalysis. Complex I functions in the transfer of electrons from NADH to the respiratory chain. The immediate electron acceptor for the enzyme is believed to be ubiquinone. In Mus musculus (Mouse), this protein is NADH dehydrogenase [ubiquinone] 1 beta subcomplex subunit 9 (Ndufb9).